The chain runs to 427 residues: Flavohemoprotein (427 aa).

The Globin domain occupies 30–168 (ELNESQKQYI…LAKILIDSEK (139 aa)). H114 contacts heme b. Residues Y124 and E167 each act as charge relay system in the active site. The reductase stretch occupies residues 176-427 (WNGFVEFKVT…QSEFFGPYIP (252 aa)). Residues 177-285 (NGFVEFKVTE…SPPAGNFVYK (109 aa)) form the FAD-binding FR-type domain. Residues Y216 and 232–235 (REYS) each bind FAD. Residue 301-306 (GIGITP) participates in NADP(+) binding. Residue 421 to 424 (FFGP) coordinates FAD.

Belongs to the globin family. Two-domain flavohemoproteins subfamily. The protein in the C-terminal section; belongs to the flavoprotein pyridine nucleotide cytochrome reductase family. The cofactor is FAD. It depends on heme b as a cofactor.

Its subcellular location is the cytoplasm. It is found in the nucleus. The enzyme catalyses 2 nitric oxide + NADPH + 2 O2 = 2 nitrate + NADP(+) + H(+). It catalyses the reaction 2 nitric oxide + NADH + 2 O2 = 2 nitrate + NAD(+) + H(+). Functionally, is involved in NO detoxification in an aerobic process, termed nitric oxide dioxygenase (NOD) reaction that utilizes O(2) and NAD(P)H to convert NO to nitrate, which protects the fungus from various noxious nitrogen compounds. Therefore, plays a central role in the inducible response to nitrosative stress. Its function is as follows. In the presence of oxygen and NADH, it has NADH oxidase activity, which leads to the generation of superoxide and H(2)O(2). Under anaerobic conditions, it also exhibits nitric oxide reductase and FAD reductase activities. However, all these reactions are much lower than NOD activity. The sequence is that of Flavohemoprotein from Schizosaccharomyces pombe (strain 972 / ATCC 24843) (Fission yeast).